We begin with the raw amino-acid sequence, 134 residues long: Acyl-CoA thioester hydrolase YbgC (134 aa).

Asp-18 is an active-site residue.

Belongs to the 4-hydroxybenzoyl-CoA thioesterase family.

Its subcellular location is the cell inner membrane. Functionally, thioesterase that appears to be involved in phospholipid metabolism. Some specific acyl-ACPs could be physiological substrates. Displays acyl-CoA thioesterase activity on malonyl-CoA in vitro, catalyzing the hydrolysis of the thioester bond. The polypeptide is Acyl-CoA thioester hydrolase YbgC (ybgC) (Escherichia coli O157:H7).